Reading from the N-terminus, the 830-residue chain is Periplasmic nitrate reductase 2 (830 aa).

A signal peptide (tat-type signal) is located at residues 1–31; that stretch reads MKVSRRKFIKAQAVASAAAAAGISIPISASN. Residues 41–97 form the 4Fe-4S Mo/W bis-MGD-type domain; sequence ITWEKAPCRFCGTGCSVNVGTKEGKVVATHGDIKSPVNRGLNCVKGYFLSKIMYGKD. [4Fe-4S] cluster is bound by residues Cys-48, Cys-51, Cys-55, and Cys-83. Mo-bis(molybdopterin guanine dinucleotide) contacts are provided by residues Lys-85, Gln-152, Asn-177, Cys-181, 245–249, 264–266, Met-374, Gln-378, Asn-484, 510–511, Lys-533, Asp-560, and 720–729; these read STFEH, QSD, SE, and TGRVIEHWHS. Trp-796 provides a ligand contact to substrate. 2 residues coordinate Mo-bis(molybdopterin guanine dinucleotide): Asn-804 and Lys-821.

It belongs to the prokaryotic molybdopterin-containing oxidoreductase family. NasA/NapA/NarB subfamily. Component of the periplasmic nitrate reductase NapAB complex composed of NapA and NapB. The cofactor is [4Fe-4S] cluster. Mo-bis(molybdopterin guanine dinucleotide) serves as cofactor. Post-translationally, predicted to be exported by the Tat system. The position of the signal peptide cleavage has not been experimentally proven.

It localises to the periplasm. It carries out the reaction 2 Fe(II)-[cytochrome] + nitrate + 2 H(+) = 2 Fe(III)-[cytochrome] + nitrite + H2O. In terms of biological role, catalytic subunit of the periplasmic nitrate reductase complex NapAB. Receives electrons from NapB and catalyzes the reduction of nitrate to nitrite. In Photobacterium profundum (strain SS9), this protein is Periplasmic nitrate reductase 2.